We begin with the raw amino-acid sequence, 625 residues long: Archaeosine synthase subunit alpha (625 aa).

The PUA domain occupies 556–624; that stretch reads KYVVKIDDFV…VAVDVRHVKK (69 aa).

The protein belongs to the archaeosine synthase type 1 family. In terms of assembly, forms a robust complex with the archaeosine synthase beta subunit RaSEA. Formation of this complex highly increases lysine transfer activity. The complex likely consists of an alpha(2)beta(2) heterotetrameric structure.

The enzyme catalyses 7-cyano-7-carbaguanosine(15) in tRNA + L-lysine = 7-N-[(5S)-5-amino-5-carboxypentyl]formamidino-7-deazaguanosine(15) in tRNA. The protein operates within tRNA modification; archaeosine-tRNA biosynthesis. Its function is as follows. Functions in the biosynthesis of archaeosine, a modified nucleoside present in the dihydrouridine loop (D-loop) of archaeal tRNAs. Catalyzes the addition of L-lysine to the cyano group of 7-cyano-7-deazaguanine (preQ0)-modified tRNAs at position 15, to generate q0kN15-tRNA, a q0N lysine adduct identified as 7-N-[(5S)-5-amino-5-carboxypentyl]formamidino-7-deazaguanosine. This chain is Archaeosine synthase subunit alpha, found in Methanosarcina acetivorans (strain ATCC 35395 / DSM 2834 / JCM 12185 / C2A).